Consider the following 190-residue polypeptide: Xanthine phosphoribosyltransferase (190 aa).

Residues Leu20 and Asn27 each contribute to the xanthine site. Ala129–Ala133 is a 5-phospho-alpha-D-ribose 1-diphosphate binding site. A xanthine-binding site is contributed by Lys157.

This sequence belongs to the purine/pyrimidine phosphoribosyltransferase family. Xpt subfamily. Homodimer.

Its subcellular location is the cytoplasm. It catalyses the reaction XMP + diphosphate = xanthine + 5-phospho-alpha-D-ribose 1-diphosphate. Its pathway is purine metabolism; XMP biosynthesis via salvage pathway; XMP from xanthine: step 1/1. Functionally, converts the preformed base xanthine, a product of nucleic acid breakdown, to xanthosine 5'-monophosphate (XMP), so it can be reused for RNA or DNA synthesis. The polypeptide is Xanthine phosphoribosyltransferase (Laribacter hongkongensis (strain HLHK9)).